Consider the following 392-residue polypeptide: Leucine-rich repeat-containing protein 74B (392 aa).

The tract at residues 24-46 (RLSGVPEAEQGPEANWDSDLETE) is disordered. LRR repeat units follow at residues 106-129 (NPYV…ALAG), 134-157 (SSSI…ALCA), 162-185 (NQAM…HLAE), 192-213 (DLKS…TLGP), 220-241 (GLTE…AFAR), 248-269 (FLKV…AVGE), 276-297 (VLEE…SLGL), 304-325 (TLRI…GLLK), and 334-356 (ALEL…ASSV).

The sequence is that of Leucine-rich repeat-containing protein 74B from Homo sapiens (Human).